The primary structure comprises 284 residues: L-ribulose-5-phosphate 3-epimerase UlaE (284 aa).

Belongs to the L-ribulose-5-phosphate 3-epimerase family.

The enzyme catalyses L-ribulose 5-phosphate = L-xylulose 5-phosphate. It participates in cofactor degradation; L-ascorbate degradation; D-xylulose 5-phosphate from L-ascorbate: step 3/4. In terms of biological role, catalyzes the isomerization of L-xylulose-5-phosphate to L-ribulose-5-phosphate. Is involved in the anaerobic L-ascorbate utilization. The polypeptide is L-ribulose-5-phosphate 3-epimerase UlaE (Escherichia coli O157:H7 (strain EC4115 / EHEC)).